A 234-amino-acid polypeptide reads, in one-letter code: Probable chemoreceptor glutamine deamidase CheD (234 aa).

The protein belongs to the CheD family.

It catalyses the reaction L-glutaminyl-[protein] + H2O = L-glutamyl-[protein] + NH4(+). Its function is as follows. Probably deamidates glutamine residues to glutamate on methyl-accepting chemotaxis receptors (MCPs), playing an important role in chemotaxis. The sequence is that of Probable chemoreceptor glutamine deamidase CheD from Burkholderia mallei (strain NCTC 10247).